A 518-amino-acid polypeptide reads, in one-letter code: Protein nucleotidyltransferase YdiU (518 aa).

A disordered region spans residues 1 to 22 (MTHLQFDNRLRAELPGDPEEGP). ATP-binding residues include Gly-100, Gly-102, Arg-103, Lys-123, Asp-135, Gly-136, Arg-193, and Arg-200. The Proton acceptor role is filled by Asp-270. Mg(2+) contacts are provided by Asn-271 and Asp-280. Asp-280 contributes to the ATP binding site.

The protein belongs to the SELO family. It depends on Mg(2+) as a cofactor. Mn(2+) is required as a cofactor.

It carries out the reaction L-seryl-[protein] + ATP = 3-O-(5'-adenylyl)-L-seryl-[protein] + diphosphate. The enzyme catalyses L-threonyl-[protein] + ATP = 3-O-(5'-adenylyl)-L-threonyl-[protein] + diphosphate. It catalyses the reaction L-tyrosyl-[protein] + ATP = O-(5'-adenylyl)-L-tyrosyl-[protein] + diphosphate. The catalysed reaction is L-histidyl-[protein] + UTP = N(tele)-(5'-uridylyl)-L-histidyl-[protein] + diphosphate. It carries out the reaction L-seryl-[protein] + UTP = O-(5'-uridylyl)-L-seryl-[protein] + diphosphate. The enzyme catalyses L-tyrosyl-[protein] + UTP = O-(5'-uridylyl)-L-tyrosyl-[protein] + diphosphate. Nucleotidyltransferase involved in the post-translational modification of proteins. It can catalyze the addition of adenosine monophosphate (AMP) or uridine monophosphate (UMP) to a protein, resulting in modifications known as AMPylation and UMPylation. The chain is Protein nucleotidyltransferase YdiU from Xanthomonas campestris pv. campestris (strain 8004).